The following is a 155-amino-acid chain: SsrA-binding protein (155 aa).

Residues 123–142 (DLHDKRETEKKRDWEREKGQ) show a composition bias toward basic and acidic residues. Residues 123–155 (DLHDKRETEKKRDWEREKGQLMRHKISSPRKDT) form a disordered region. Over residues 143–155 (LMRHKISSPRKDT) the composition is skewed to basic residues.

The protein belongs to the SmpB family.

Its subcellular location is the cytoplasm. Functionally, required for rescue of stalled ribosomes mediated by trans-translation. Binds to transfer-messenger RNA (tmRNA), required for stable association of tmRNA with ribosomes. tmRNA and SmpB together mimic tRNA shape, replacing the anticodon stem-loop with SmpB. tmRNA is encoded by the ssrA gene; the 2 termini fold to resemble tRNA(Ala) and it encodes a 'tag peptide', a short internal open reading frame. During trans-translation Ala-aminoacylated tmRNA acts like a tRNA, entering the A-site of stalled ribosomes, displacing the stalled mRNA. The ribosome then switches to translate the ORF on the tmRNA; the nascent peptide is terminated with the 'tag peptide' encoded by the tmRNA and targeted for degradation. The ribosome is freed to recommence translation, which seems to be the essential function of trans-translation. The polypeptide is SsrA-binding protein (Methylibium petroleiphilum (strain ATCC BAA-1232 / LMG 22953 / PM1)).